The primary structure comprises 267 residues: DNA repair protein RecO (267 aa).

The protein belongs to the RecO family.

In terms of biological role, involved in DNA repair and RecF pathway recombination. The chain is DNA repair protein RecO from Prochlorococcus marinus (strain MIT 9303).